The primary structure comprises 207 residues: Uridine kinase (207 aa).

14–21 (GGSGSGKT) is an ATP binding site.

It belongs to the uridine kinase family.

It localises to the cytoplasm. It catalyses the reaction uridine + ATP = UMP + ADP + H(+). The enzyme catalyses cytidine + ATP = CMP + ADP + H(+). It participates in pyrimidine metabolism; CTP biosynthesis via salvage pathway; CTP from cytidine: step 1/3. Its pathway is pyrimidine metabolism; UMP biosynthesis via salvage pathway; UMP from uridine: step 1/1. The protein is Uridine kinase of Deinococcus deserti (strain DSM 17065 / CIP 109153 / LMG 22923 / VCD115).